Reading from the N-terminus, the 256-residue chain is MLEFYGKRFESRLLLGTAQYPSPSILADAVRASLSRTVTVSLRRESGEARAGQDFWALIKALGVAVLPNTAGCHTPREAITTAHMAREVFGTNWIKLEVIGDTDTLQPDPFGLVEAARILCDEGFEVFPYMNDDLIVAERLIEAGCKVLMPWGAPIGSGRGLNNPYALKTMRAHFPDIPLVVDAGIGVPSHAAAAMELGFDAVLINTAVAKAGDPAAMARAFALAVEAGRLAYEADPIEARDMASPSTPLLGKAFL.

Catalysis depends on Lys96, which acts as the Schiff-base intermediate with DXP. 1-deoxy-D-xylulose 5-phosphate contacts are provided by residues Gly157, 184–185 (AG), and 206–207 (NT).

This sequence belongs to the ThiG family. In terms of assembly, homotetramer. Forms heterodimers with either ThiH or ThiS.

It is found in the cytoplasm. The catalysed reaction is [ThiS sulfur-carrier protein]-C-terminal-Gly-aminoethanethioate + 2-iminoacetate + 1-deoxy-D-xylulose 5-phosphate = [ThiS sulfur-carrier protein]-C-terminal Gly-Gly + 2-[(2R,5Z)-2-carboxy-4-methylthiazol-5(2H)-ylidene]ethyl phosphate + 2 H2O + H(+). The protein operates within cofactor biosynthesis; thiamine diphosphate biosynthesis. In terms of biological role, catalyzes the rearrangement of 1-deoxy-D-xylulose 5-phosphate (DXP) to produce the thiazole phosphate moiety of thiamine. Sulfur is provided by the thiocarboxylate moiety of the carrier protein ThiS. In vitro, sulfur can be provided by H(2)S. The chain is Thiazole synthase from Brucella suis (strain ATCC 23445 / NCTC 10510).